The chain runs to 304 residues: Non-specific ribonucleoside hydrolase RihC (304 aa).

Histidine 233 is a catalytic residue.

This sequence belongs to the IUNH family. RihC subfamily.

In terms of biological role, hydrolyzes both purine and pyrimidine ribonucleosides with a broad-substrate specificity. The sequence is that of Non-specific ribonucleoside hydrolase RihC from Escherichia coli O45:K1 (strain S88 / ExPEC).